The following is a 101-amino-acid chain: MMLEHVLVLSAYLFSVGLYGLITSRNMVRALMCLELILNAVNLNFVTFSDFFDSRQLKGAIFSIFVIAIAAAEAAIGLAIVSSIYRNRKSTRINQSNLLNK.

The next 3 helical transmembrane spans lie at 2–22, 32–52, and 61–81; these read MLEHVLVLSAYLFSVGLYGLI, MCLELILNAVNLNFVTFSDFF, and IFSIFVIAIAAAEAAIGLAIV.

Belongs to the complex I subunit 4L family. In terms of assembly, NDH is composed of at least 16 different subunits, 5 of which are encoded in the nucleus.

It is found in the plastid. Its subcellular location is the chloroplast thylakoid membrane. It catalyses the reaction a plastoquinone + NADH + (n+1) H(+)(in) = a plastoquinol + NAD(+) + n H(+)(out). The enzyme catalyses a plastoquinone + NADPH + (n+1) H(+)(in) = a plastoquinol + NADP(+) + n H(+)(out). NDH shuttles electrons from NAD(P)H:plastoquinone, via FMN and iron-sulfur (Fe-S) centers, to quinones in the photosynthetic chain and possibly in a chloroplast respiratory chain. The immediate electron acceptor for the enzyme in this species is believed to be plastoquinone. Couples the redox reaction to proton translocation, and thus conserves the redox energy in a proton gradient. The chain is NAD(P)H-quinone oxidoreductase subunit 4L, chloroplastic from Helianthus annuus (Common sunflower).